The chain runs to 456 residues: Adenylosuccinate lyase (456 aa).

N(6)-(1,2-dicarboxyethyl)-AMP contacts are provided by residues 15–16 (RY), 90–92 (NHD), and 122–123 (TS). Histidine 171 acts as the Proton donor/acceptor in catalysis. Glutamine 247 contacts N(6)-(1,2-dicarboxyethyl)-AMP. Serine 295 (proton donor/acceptor) is an active-site residue. Residues serine 296, 301–303 (KVN), asparagine 309, arginine 335, and 340–344 (STVLR) contribute to the N(6)-(1,2-dicarboxyethyl)-AMP site.

This sequence belongs to the lyase 1 family. Adenylosuccinate lyase subfamily. Homotetramer. Residues from neighboring subunits contribute catalytic and substrate-binding residues to each active site.

It carries out the reaction N(6)-(1,2-dicarboxyethyl)-AMP = fumarate + AMP. The catalysed reaction is (2S)-2-[5-amino-1-(5-phospho-beta-D-ribosyl)imidazole-4-carboxamido]succinate = 5-amino-1-(5-phospho-beta-D-ribosyl)imidazole-4-carboxamide + fumarate. Its pathway is purine metabolism; AMP biosynthesis via de novo pathway; AMP from IMP: step 2/2. It participates in purine metabolism; IMP biosynthesis via de novo pathway; 5-amino-1-(5-phospho-D-ribosyl)imidazole-4-carboxamide from 5-amino-1-(5-phospho-D-ribosyl)imidazole-4-carboxylate: step 2/2. Functionally, catalyzes two reactions in de novo purine nucleotide biosynthesis. Catalyzes the breakdown of 5-aminoimidazole- (N-succinylocarboxamide) ribotide (SAICAR or 2-[5-amino-1-(5-phospho-beta-D-ribosyl)imidazole-4-carboxamido]succinate) to 5-aminoimidazole-4-carboxamide ribotide (AICAR or 5-amino-1-(5-phospho-beta-D-ribosyl)imidazole-4-carboxamide) and fumarate, and of adenylosuccinate (ADS or N(6)-(1,2-dicarboxyethyl)-AMP) to adenosine monophosphate (AMP) and fumarate. The protein is Adenylosuccinate lyase (purB) of Legionella pneumophila subsp. pneumophila (strain Philadelphia 1 / ATCC 33152 / DSM 7513).